The following is a 585-amino-acid chain: Membrane protein insertase YidC (585 aa).

6 helical membrane passes run 5–25 (SVTGLALIALIMIVWLQFMSP), 338–358 (FGWDWLTRPFAEFVILPAFTW), 362–382 (FVSNYGLIIIIFAFLIKLVTY), 432–452 (LGGCLPVVLQMPLLFAMFYVF), 482–502 (IPMYGSHIALLPILMAVTVFL), and 518–538 (IMLYMFPAMMLLFFNNMPSGL).

Belongs to the OXA1/ALB3/YidC family. Type 1 subfamily. As to quaternary structure, interacts with the Sec translocase complex via SecD. Specifically interacts with transmembrane segments of nascent integral membrane proteins during membrane integration.

Its subcellular location is the cell inner membrane. Functionally, required for the insertion and/or proper folding and/or complex formation of integral membrane proteins into the membrane. Involved in integration of membrane proteins that insert both dependently and independently of the Sec translocase complex, as well as at least some lipoproteins. Aids folding of multispanning membrane proteins. In Chlorobium luteolum (strain DSM 273 / BCRC 81028 / 2530) (Pelodictyon luteolum), this protein is Membrane protein insertase YidC.